A 305-amino-acid chain; its full sequence is UDP-3-O-acyl-N-acetylglucosamine deacetylase (305 aa).

Zn(2+)-binding residues include His79, His238, and Asp242. His265 functions as the Proton donor in the catalytic mechanism.

Belongs to the LpxC family. Zn(2+) is required as a cofactor.

The catalysed reaction is a UDP-3-O-[(3R)-3-hydroxyacyl]-N-acetyl-alpha-D-glucosamine + H2O = a UDP-3-O-[(3R)-3-hydroxyacyl]-alpha-D-glucosamine + acetate. Its pathway is glycolipid biosynthesis; lipid IV(A) biosynthesis; lipid IV(A) from (3R)-3-hydroxytetradecanoyl-[acyl-carrier-protein] and UDP-N-acetyl-alpha-D-glucosamine: step 2/6. Its function is as follows. Catalyzes the hydrolysis of UDP-3-O-myristoyl-N-acetylglucosamine to form UDP-3-O-myristoylglucosamine and acetate, the committed step in lipid A biosynthesis. The protein is UDP-3-O-acyl-N-acetylglucosamine deacetylase of Citrobacter koseri (strain ATCC BAA-895 / CDC 4225-83 / SGSC4696).